The sequence spans 311 residues: Dehydrogenase/reductase SDR family member 7C (311 aa).

A signal peptide spans M1–G18. NAD(+) contacts are provided by S47, L49, Y191, K195, and S226. Y191 functions as the Proton acceptor in the catalytic mechanism.

The protein belongs to the short-chain dehydrogenases/reductases (SDR) family. As to expression, expressed in skeletal muscle, cardiac muscle and skin.

It is found in the sarcoplasmic reticulum membrane. It catalyses the reaction all-trans-retinol + NAD(+) = all-trans-retinal + NADH + H(+). In terms of biological role, NADH-dependent oxidoreductase which catalyzes the oxidation of all-trans-retinol to all-trans-retinal. Plays a role in the regulation of cardiac and skeletal muscle metabolic functions. Maintains Ca(2+) intracellular homeostasis by repressing Ca(2+) release from the sarcoplasmic reticulum (SR) in myotubes, possibly through local alternations in NAD/NADH or retinol/retinal. Also plays a role in Ca(2+) homeostasis by controlling Ca(2+) overload in the cytosol and the SR in myotubes. Involved in glucose uptake into skeletal muscles and muscle performance by activating PI3K and mTORC2-mediated AKT1 phosphorylation signaling pathways, possibly through the action of its downstream catalytic product all-trans-retinoic acid. This chain is Dehydrogenase/reductase SDR family member 7C, found in Rattus norvegicus (Rat).